Here is a 266-residue protein sequence, read N- to C-terminus: Phosphatidylglycerol--prolipoprotein diacylglyceryl transferase (266 aa).

7 helical membrane-spanning segments follow: residues 17–37 (LKIH…WLLA), 56–76 (LVFW…VLFY), 92–112 (WKGG…VWWF), 120–140 (FFQL…AGRI), 171–191 (PSQL…LWLF), 199–219 (ASVS…VEFV), and 233–253 (WLTM…ALMV). Arg-139 is a binding site for a 1,2-diacyl-sn-glycero-3-phospho-(1'-sn-glycerol).

Belongs to the Lgt family.

It localises to the cell inner membrane. The catalysed reaction is L-cysteinyl-[prolipoprotein] + a 1,2-diacyl-sn-glycero-3-phospho-(1'-sn-glycerol) = an S-1,2-diacyl-sn-glyceryl-L-cysteinyl-[prolipoprotein] + sn-glycerol 1-phosphate + H(+). Its pathway is protein modification; lipoprotein biosynthesis (diacylglyceryl transfer). Functionally, catalyzes the transfer of the diacylglyceryl group from phosphatidylglycerol to the sulfhydryl group of the N-terminal cysteine of a prolipoprotein, the first step in the formation of mature lipoproteins. This is Phosphatidylglycerol--prolipoprotein diacylglyceryl transferase from Pseudomonas aeruginosa (strain UCBPP-PA14).